A 193-amino-acid chain; its full sequence is Selenoprotein S A (193 aa).

The helical transmembrane segment at 29 to 49 threads the bilayer; it reads WALASYGWYILFGCIILYFLI. The span at 114 to 125 shows a compositional bias: basic and acidic residues; that stretch reads IETWDRMQEGKS. Residues 114–193 are disordered; sequence IETWDRMQEG…RRGPSSGGUG (80 aa). Low complexity predominate over residues 137–153; sequence SPSTSASSSPSTSSSAP. Sec-192 is a non-standard amino acid (selenocysteine).

It belongs to the selenoprotein S family.

It is found in the endoplasmic reticulum membrane. It localises to the cytoplasm. In terms of biological role, involved in the degradation process of misfolded endoplasmic reticulum (ER) luminal proteins. Participates in the transfer of misfolded proteins from the ER to the cytosol, where they are destroyed by the proteasome in a ubiquitin-dependent manner. In Xenopus laevis (African clawed frog), this protein is Selenoprotein S A (vimp-a).